We begin with the raw amino-acid sequence, 184 residues long: Gastrokine-2 (184 aa).

A signal peptide spans 1–20 (MKPLVAFLVVLSIFGIQSQA). In terms of domain architecture, BRICHOS spans 54-151 (HSGSCSSTTI…LCKHMPLYEG (98 aa)). A disulfide bond links Cys-81 and Cys-143.

As to quaternary structure, heterodimer with TFF1; disulfide linked. Interacts with TFF2. In terms of tissue distribution, stomach foveolar epithelium and duodenal Brunner's glands.

The protein resides in the secreted. It localises to the golgi apparatus. The sequence is that of Gastrokine-2 (Gkn2) from Mus musculus (Mouse).